The following is a 104-amino-acid chain: Ig lambda-3 chain C region (104 aa).

The Ig-like domain occupies 6-99; it reads PTLTMFPPSP…EGDTVEKSLS (94 aa). Cys27 and Cys85 are oxidised to a cystine.

The polypeptide is Ig lambda-3 chain C region (Iglc3) (Mus musculus (Mouse)).